The primary structure comprises 107 residues: Iron-sulfur cluster assembly protein CyaY (107 aa).

This sequence belongs to the frataxin family.

Involved in iron-sulfur (Fe-S) cluster assembly. May act as a regulator of Fe-S biogenesis. The protein is Iron-sulfur cluster assembly protein CyaY of Yersinia pseudotuberculosis serotype O:1b (strain IP 31758).